A 31-amino-acid polypeptide reads, in one-letter code: Photosystem II reaction center protein T (31 aa).

A helical transmembrane segment spans residues 3–23 (SVAYILILTMALAVLFFAIAF).

The protein belongs to the PsbT family. As to quaternary structure, PSII is composed of 1 copy each of membrane proteins PsbA, PsbB, PsbC, PsbD, PsbE, PsbF, PsbH, PsbI, PsbJ, PsbK, PsbL, PsbM, PsbT, PsbX, PsbY, PsbZ, Psb30/Ycf12, peripheral proteins PsbO, CyanoQ (PsbQ), PsbU, PsbV and a large number of cofactors. It forms dimeric complexes.

The protein resides in the cellular thylakoid membrane. Found at the monomer-monomer interface of the photosystem II (PS II) dimer, plays a role in assembly and dimerization of PSII. PSII is a light-driven water plastoquinone oxidoreductase, using light energy to abstract electrons from H(2)O, generating a proton gradient subsequently used for ATP formation. The chain is Photosystem II reaction center protein T from Gloeothece citriformis (strain PCC 7424) (Cyanothece sp. (strain PCC 7424)).